Reading from the N-terminus, the 392-residue chain is MPSFPRTVMLLGSGELGKEVAIAAQRLGCRVIACDRYAGAPAMQVADVAEVLPMTDADALLEVVRRHQPDVVIPEIEALAVHALAELEQEGITVIPTARATAVTMNRDRIRDLAAGELNLRTARFAYASSAEELKAVAEPLGWPVVVKPVMSSSGKGQSVVDCADDLPKAWEAAMAGARGTSTQVIVEEFLHFDLEITLLTIRQRNGETLFCAPIGHEQEGGDYQCSWQPAQLTDQQLHQAQAMAKTVTDNLGGAGLFGVEFFLCDDEVIFSELSPRPHDTGLVTLISQNLSEFELHLRAVLGLPIPAITAADAAASRVILAQTNMDSVAFEGVEQALTEADTQVLLFGKPTARPGRRMGVALARGVDRKEAQAKADRAAACVSVIPGSTAG.

N(1)-(5-phospho-beta-D-ribosyl)glycinamide-binding positions include 15-16 and glutamate 75; that span reads EL. Residues arginine 107, lysine 148, 153–158, 188–191, and glutamate 196 contribute to the ATP site; these read SSGKGQ and EEFL. The ATP-grasp domain maps to 112-302; it reads DLAAGELNLR…EFELHLRAVL (191 aa). Residues glutamate 261 and glutamate 273 each contribute to the Mg(2+) site. N(1)-(5-phospho-beta-D-ribosyl)glycinamide contacts are provided by residues aspartate 280, lysine 350, and 357-358; that span reads RR.

Belongs to the PurK/PurT family. Homodimer.

It carries out the reaction N(1)-(5-phospho-beta-D-ribosyl)glycinamide + formate + ATP = N(2)-formyl-N(1)-(5-phospho-beta-D-ribosyl)glycinamide + ADP + phosphate + H(+). It functions in the pathway purine metabolism; IMP biosynthesis via de novo pathway; N(2)-formyl-N(1)-(5-phospho-D-ribosyl)glycinamide from N(1)-(5-phospho-D-ribosyl)glycinamide (formate route): step 1/1. In terms of biological role, involved in the de novo purine biosynthesis. Catalyzes the transfer of formate to 5-phospho-ribosyl-glycinamide (GAR), producing 5-phospho-ribosyl-N-formylglycinamide (FGAR). Formate is provided by PurU via hydrolysis of 10-formyl-tetrahydrofolate. The polypeptide is Formate-dependent phosphoribosylglycinamide formyltransferase (Synechococcus sp. (strain CC9605)).